We begin with the raw amino-acid sequence, 379 residues long: tRNA 2-selenouridine synthase (379 aa).

In terms of domain architecture, Rhodanese spans 17-140 (FLSGAPLLDT…MRRFLIESLE (124 aa)). Catalysis depends on cysteine 100, which acts as the S-selanylcysteine intermediate.

Belongs to the SelU family. As to quaternary structure, monomer.

The catalysed reaction is 5-methylaminomethyl-2-thiouridine(34) in tRNA + selenophosphate + (2E)-geranyl diphosphate + H2O + H(+) = 5-methylaminomethyl-2-selenouridine(34) in tRNA + (2E)-thiogeraniol + phosphate + diphosphate. It carries out the reaction 5-methylaminomethyl-2-thiouridine(34) in tRNA + (2E)-geranyl diphosphate = 5-methylaminomethyl-S-(2E)-geranyl-thiouridine(34) in tRNA + diphosphate. It catalyses the reaction 5-methylaminomethyl-S-(2E)-geranyl-thiouridine(34) in tRNA + selenophosphate + H(+) = 5-methylaminomethyl-2-(Se-phospho)selenouridine(34) in tRNA + (2E)-thiogeraniol. The enzyme catalyses 5-methylaminomethyl-2-(Se-phospho)selenouridine(34) in tRNA + H2O = 5-methylaminomethyl-2-selenouridine(34) in tRNA + phosphate. Its function is as follows. Involved in the post-transcriptional modification of the uridine at the wobble position (U34) of tRNA(Lys), tRNA(Glu) and tRNA(Gln). Catalyzes the conversion of 2-thiouridine (S2U-RNA) to 2-selenouridine (Se2U-RNA). Acts in a two-step process involving geranylation of 2-thiouridine (S2U) to S-geranyl-2-thiouridine (geS2U) and subsequent selenation of the latter derivative to 2-selenouridine (Se2U) in the tRNA chain. This is tRNA 2-selenouridine synthase from Hahella chejuensis (strain KCTC 2396).